The sequence spans 84 residues: ATP synthase subunit c (84 aa).

Transmembrane regions (helical) follow at residues 9 to 29 (IIGA…GFAI) and 54 to 74 (IVAG…LLFI).

This sequence belongs to the ATPase C chain family. F-type ATPases have 2 components, F(1) - the catalytic core - and F(0) - the membrane proton channel. F(1) has five subunits: alpha(3), beta(3), gamma(1), delta(1), epsilon(1). F(0) has three main subunits: a(1), b(2) and c(10-14). The alpha and beta chains form an alternating ring which encloses part of the gamma chain. F(1) is attached to F(0) by a central stalk formed by the gamma and epsilon chains, while a peripheral stalk is formed by the delta and b chains.

Its subcellular location is the cell inner membrane. In terms of biological role, f(1)F(0) ATP synthase produces ATP from ADP in the presence of a proton or sodium gradient. F-type ATPases consist of two structural domains, F(1) containing the extramembraneous catalytic core and F(0) containing the membrane proton channel, linked together by a central stalk and a peripheral stalk. During catalysis, ATP synthesis in the catalytic domain of F(1) is coupled via a rotary mechanism of the central stalk subunits to proton translocation. Key component of the F(0) channel; it plays a direct role in translocation across the membrane. A homomeric c-ring of between 10-14 subunits forms the central stalk rotor element with the F(1) delta and epsilon subunits. The chain is ATP synthase subunit c from Glaesserella parasuis serovar 5 (strain SH0165) (Haemophilus parasuis).